The following is a 28-amino-acid chain: N-acetyl-D-galactosamine-binding lectin subunit A (28 aa).

This sequence belongs to the ribosome-inactivating protein family. Disulfide-linked heterodimer of A and B chains.

It carries out the reaction Endohydrolysis of the N-glycosidic bond at one specific adenosine on the 28S rRNA.. Functionally, gal / GalNAc-specific lectin. Agglutinates both native and trypsin-treated rabbit erythrocytes but not human erythrocytes irrespective of blood group type. This is N-acetyl-D-galactosamine-binding lectin subunit A from Iris hollandica (Dutch iris).